The primary structure comprises 86 residues: MANIKSQQKRNRTNERARLRNKAVKSSLRTAVRAFREAAHAGDKAKAAELLASTNRKLDKAASKGVIHKNQAANKKSALAQALNKL.

The interval 1 to 25 (MANIKSQQKRNRTNERARLRNKAVK) is disordered.

This sequence belongs to the bacterial ribosomal protein bS20 family.

Its function is as follows. Binds directly to 16S ribosomal RNA. The chain is Small ribosomal subunit protein bS20 from Mycobacterium bovis (strain ATCC BAA-935 / AF2122/97).